The primary structure comprises 355 residues: UDP-glucose 4-epimerase uge1 (355 aa).

Position 8–39 (8–39 (TVLVTGGAGYIGSHTCVVLLEKGYDVVIVDNL)) interacts with NAD(+).

Belongs to the NAD(P)-dependent epimerase/dehydratase family. Requires NAD(+) as cofactor.

The catalysed reaction is UDP-alpha-D-glucose = UDP-alpha-D-galactose. It participates in carbohydrate metabolism; galactose metabolism. Its function is as follows. Major UDP-glucose/-galactose 4-epimerase under glucose-rich conditions involved in protein galactosylation. The polypeptide is UDP-glucose 4-epimerase uge1 (uge1) (Schizosaccharomyces pombe (strain 972 / ATCC 24843) (Fission yeast)).